The following is a 267-amino-acid chain: Small ribosomal subunit protein eS4 (267 aa).

One can recognise an S4 RNA-binding domain in the interval 42–104 (LPLILVLRNR…TKENFRLLFD (63 aa)).

It belongs to the eukaryotic ribosomal protein eS4 family.

It localises to the cytoplasm. The sequence is that of Small ribosomal subunit protein eS4 (rps4) from Dictyostelium discoideum (Social amoeba).